The following is a 233-amino-acid chain: MWQLLLPTALLLLVSAGMRTEDLPKAVVFLEPQWYSVLEKDSVTLKCQGAYSPEDNSTQWFHNENLISSQASSYFIDAATVNDSGEYRCQTNLSTLSDPVQLEVHIGWLLLQAPRWVFKEEDPIHLRCHSWKNTALHKVTYLQNGKDRKYFHHNSDFHIPKATLKDSGSYFCRGLVGSKNVSSETVNITITQGLAVSTISSFSPPGYQVSFCLVMVLLFAVDTGLYFSVKTNI.

An N-terminal signal peptide occupies residues 1–16 (MWQLLLPTALLLLVSA). 2 consecutive Ig-like C2-type domains span residues 40–96 (KDSV…LSTL) and 121–179 (EDPI…VGSK). An intrachain disulfide couples Cys-47 to Cys-89. 4 N-linked (GlcNAc...) asparagine glycosylation sites follow: Asn-56, Asn-63, Asn-82, and Asn-92. A disulfide bond links Cys-128 and Cys-172. N-linked (GlcNAc...) asparagine glycans are attached at residues Asn-180 and Asn-187. Residue Ser-200 is the site of GPI-anchor amidated serine attachment. The propeptide at 201 to 233 (SFSPPGYQVSFCLVMVLLFAVDTGLYFSVKTNI) is removed in mature form.

In terms of assembly, monomer. Interacts with INPP5D/SHIP1. In terms of processing, glycosylated. Glycosylation plays an inhibitory role in the interaction with IgG3. The soluble form is produced by a proteolytic cleavage. Expressed specifically by polymorphonuclear leukocytes (neutrophils). Also expressed by stimulated eosinophils.

It localises to the cell membrane. Its subcellular location is the secreted. Receptor for the Fc region of immunoglobulins gamma. Low affinity receptor. Binds complexed or aggregated IgG and also monomeric IgG. Contrary to III-A, is not capable to mediate antibody-dependent cytotoxicity and phagocytosis. May serve as a trap for immune complexes in the peripheral circulation which does not activate neutrophils. The protein is Low affinity immunoglobulin gamma Fc region receptor III-B (FCGR3B) of Homo sapiens (Human).